Consider the following 216-residue polypeptide: Octanoyltransferase (216 aa).

Residues 24-212 (KFRKECILFL…NLCSFLEPIN (189 aa)) enclose the BPL/LPL catalytic domain. Substrate is bound by residues 69–76 (RGGDFTAH), 140–142 (SIG), and 153–155 (GIA). Cys171 (acyl-thioester intermediate) is an active-site residue.

It belongs to the LipB family.

Its subcellular location is the cytoplasm. The enzyme catalyses octanoyl-[ACP] + L-lysyl-[protein] = N(6)-octanoyl-L-lysyl-[protein] + holo-[ACP] + H(+). It functions in the pathway protein modification; protein lipoylation via endogenous pathway; protein N(6)-(lipoyl)lysine from octanoyl-[acyl-carrier-protein]: step 1/2. In terms of biological role, catalyzes the transfer of endogenously produced octanoic acid from octanoyl-acyl-carrier-protein onto the lipoyl domains of lipoate-dependent enzymes. Lipoyl-ACP can also act as a substrate although octanoyl-ACP is likely to be the physiological substrate. In Leptospira interrogans serogroup Icterohaemorrhagiae serovar copenhageni (strain Fiocruz L1-130), this protein is Octanoyltransferase.